The chain runs to 817 residues: LPS-assembly protein LptD (817 aa).

Positions 1–26 (MPALVVSPDLVRGAAGASAAPTPAPA) are cleaved as a signal peptide. Residues 1-101 (MPALVVSPDL…ARKPGSTEVR (101 aa)) are disordered. Over residues 13-90 (GAAGASAAPT…PAASASPADA (78 aa)) the composition is skewed to low complexity.

It belongs to the LptD family. Component of the lipopolysaccharide transport and assembly complex. Interacts with LptE and LptA.

It localises to the cell outer membrane. Functionally, together with LptE, is involved in the assembly of lipopolysaccharide (LPS) at the surface of the outer membrane. The sequence is that of LPS-assembly protein LptD from Azoarcus sp. (strain BH72).